The following is a 354-amino-acid chain: Chorismate synthase (354 aa).

Arg48 lines the NADP(+) pocket. FMN contacts are provided by residues 125–127 (RAS), Gly277, 292–296 (KPIPS), and Arg318.

Belongs to the chorismate synthase family. As to quaternary structure, homotetramer. It depends on FMNH2 as a cofactor.

The enzyme catalyses 5-O-(1-carboxyvinyl)-3-phosphoshikimate = chorismate + phosphate. It participates in metabolic intermediate biosynthesis; chorismate biosynthesis; chorismate from D-erythrose 4-phosphate and phosphoenolpyruvate: step 7/7. In terms of biological role, catalyzes the anti-1,4-elimination of the C-3 phosphate and the C-6 proR hydrogen from 5-enolpyruvylshikimate-3-phosphate (EPSP) to yield chorismate, which is the branch point compound that serves as the starting substrate for the three terminal pathways of aromatic amino acid biosynthesis. This reaction introduces a second double bond into the aromatic ring system. This chain is Chorismate synthase, found in Nitratidesulfovibrio vulgaris (strain ATCC 29579 / DSM 644 / CCUG 34227 / NCIMB 8303 / VKM B-1760 / Hildenborough) (Desulfovibrio vulgaris).